We begin with the raw amino-acid sequence, 73 residues long: Protein BP4C (73 aa).

In terms of tissue distribution, pollen specific.

The chain is Protein BP4C (BP4C) from Brassica napus (Rape).